The following is a 470-amino-acid chain: L-seryl-tRNA(Sec) selenium transferase (470 aa).

Lys-292 bears the N6-(pyridoxal phosphate)lysine mark.

This sequence belongs to the SelA family. Requires pyridoxal 5'-phosphate as cofactor.

It localises to the cytoplasm. It carries out the reaction L-seryl-tRNA(Sec) + selenophosphate + H(+) = L-selenocysteinyl-tRNA(Sec) + phosphate. Its pathway is aminoacyl-tRNA biosynthesis; selenocysteinyl-tRNA(Sec) biosynthesis; selenocysteinyl-tRNA(Sec) from L-seryl-tRNA(Sec) (bacterial route): step 1/1. Functionally, converts seryl-tRNA(Sec) to selenocysteinyl-tRNA(Sec) required for selenoprotein biosynthesis. The protein is L-seryl-tRNA(Sec) selenium transferase of Moorella thermoacetica (strain ATCC 39073 / JCM 9320).